The sequence spans 504 residues: Probable cytosol aminopeptidase (504 aa).

The Mn(2+) site is built by K276 and D281. K288 is an active-site residue. 3 residues coordinate Mn(2+): D299, D358, and E360. The active site involves R362.

The protein belongs to the peptidase M17 family. Mn(2+) serves as cofactor.

The protein resides in the cytoplasm. It catalyses the reaction Release of an N-terminal amino acid, Xaa-|-Yaa-, in which Xaa is preferably Leu, but may be other amino acids including Pro although not Arg or Lys, and Yaa may be Pro. Amino acid amides and methyl esters are also readily hydrolyzed, but rates on arylamides are exceedingly low.. The enzyme catalyses Release of an N-terminal amino acid, preferentially leucine, but not glutamic or aspartic acids.. Presumably involved in the processing and regular turnover of intracellular proteins. Catalyzes the removal of unsubstituted N-terminal amino acids from various peptides. This is Probable cytosol aminopeptidase from Bordetella avium (strain 197N).